The sequence spans 129 residues: Small ribosomal subunit protein uS9 (129 aa).

This sequence belongs to the universal ribosomal protein uS9 family.

The sequence is that of Small ribosomal subunit protein uS9 (rpsI) from Helicobacter pylori (strain J99 / ATCC 700824) (Campylobacter pylori J99).